A 310-amino-acid chain; its full sequence is HPr kinase/phosphorylase (310 aa).

Residues histidine 136 and lysine 157 contribute to the active site. ATP is bound at residue 151–158 (GDSGIGKS). Serine 158 provides a ligand contact to Mg(2+). The active-site Proton acceptor; for phosphorylation activity. Proton donor; for dephosphorylation activity is aspartate 175. Positions 199 to 208 (LEIRGLGIIN) are important for the catalytic mechanism of both phosphorylation and dephosphorylation. Glutamate 200 contacts Mg(2+). Arginine 241 is a catalytic residue. The interval 262-267 (PVRPGR) is important for the catalytic mechanism of dephosphorylation.

The protein belongs to the HPrK/P family. As to quaternary structure, homohexamer. The cofactor is Mg(2+).

The catalysed reaction is [HPr protein]-L-serine + ATP = [HPr protein]-O-phospho-L-serine + ADP + H(+). The enzyme catalyses [HPr protein]-O-phospho-L-serine + phosphate + H(+) = [HPr protein]-L-serine + diphosphate. Catalyzes the ATP- as well as the pyrophosphate-dependent phosphorylation of a specific serine residue in HPr, a phosphocarrier protein of the phosphoenolpyruvate-dependent sugar phosphotransferase system (PTS). HprK/P also catalyzes the pyrophosphate-producing, inorganic phosphate-dependent dephosphorylation (phosphorolysis) of seryl-phosphorylated HPr (P-Ser-HPr). The two antagonistic activities of HprK/P are regulated by several intracellular metabolites, which change their concentration in response to the absence or presence of rapidly metabolisable carbon sources (glucose, fructose, etc.) in the growth medium. Therefore, by controlling the phosphorylation state of HPr, HPrK/P is a sensor enzyme that plays a major role in the regulation of carbon metabolism and sugar transport: it mediates carbon catabolite repression (CCR), and regulates PTS-catalyzed carbohydrate uptake and inducer exclusion. This is HPr kinase/phosphorylase from Staphylococcus epidermidis (strain ATCC 35984 / DSM 28319 / BCRC 17069 / CCUG 31568 / BM 3577 / RP62A).